Consider the following 1328-residue polypeptide: ABC transporter C family member 7 (1328 aa).

Positions 104-389 constitute an ABC transmembrane type-1 1 domain; it reads HKTSIIVQIF…LPQAIQRLLS (286 aa). Transmembrane regions (helical) follow at residues 112-132, 140-160, 224-244, 245-265, 287-307, and 333-353; these read IFSA…ILYV, SFLV…FLSI, LILL…CWTI, GYSG…STFL, ISEM…LFFI, and MVVQ…YTLI. Residues 457–678 enclose the ABC transporter 1 domain; sequence IELVNNDSIE…FDFESIMKTK (222 aa). An ATP-binding site is contributed by 490–497; the sequence is GVVGSGKS. Residues 684 to 695 show a composition bias toward low complexity; sequence LNNSNNNNNNNN. Positions 684–708 are disordered; the sequence is LNNSNNNNNNNNNKEEEEDVENLEK. 5 helical membrane passes run 762–782, 802–822, 894–914, 988–1008, and 1014–1034; these read FIFF…FLLF, DSFY…FLGI, VLMM…LALF, IGIK…FFSL, and GLSV…NWCI. An ABC transmembrane type-1 2 domain is found at 765–1046; sequence FFTMIMMYII…YIEFSMKMSS (282 aa). The 234-residue stretch at 1083-1316 folds into the ABC transporter 2 domain; the sequence is IQFKNVEIKY…INNQNSKFKK (234 aa). ATP is bound at residue 1117–1124; sequence GKSGSGKS.

This sequence belongs to the ABC transporter superfamily. ABCC family. Conjugate transporter (TC 3.A.1.208) subfamily.

It is found in the membrane. The protein is ABC transporter C family member 7 (abcC7) of Dictyostelium discoideum (Social amoeba).